Reading from the N-terminus, the 500-residue chain is Low-density lipoprotein receptor-related protein 11 (500 aa).

Positions 1–37 (MASVAQESAGSQRRLPPRHGALRGLLLLCLWLPSGRA) are cleaved as a signal peptide. Residues 38-450 (ALPPAAPLSE…GGEHPAPETG (413 aa)) are Extracellular-facing. Positions 99–184 (AMPDAIIRTK…FALHSGYSSY (86 aa)) constitute an MANSC domain. Asparagine 164 and asparagine 291 each carry an N-linked (GlcNAc...) asparagine glycan. The PKD domain occupies 210 to 305 (PLSKAGQDVV…VLRAAYSTGG (96 aa)). In terms of domain architecture, LDL-receptor class A spans 309-345 (TCSRYHFFCDDGCCIDITLACDGVQQCPDGSDEDFCQ). 3 disulfides stabilise this stretch: cysteine 310/cysteine 322, cysteine 317/cysteine 335, and cysteine 329/cysteine 344. Positions 358–445 (AASPALPRTT…KGDGGGGEHP (88 aa)) are disordered. Asparagine 401 carries an N-linked (GlcNAc...) asparagine glycan. The chain crosses the membrane as a helical span at residues 451–473 (AVLPLALGLAITALLLLMVACRL). The Cytoplasmic portion of the chain corresponds to 474-500 (RLVKQKLKKARPITSEESDYLINGMYL). Serine 491 is modified (phosphoserine).

This sequence belongs to the LDLR family.

Its subcellular location is the membrane. In Homo sapiens (Human), this protein is Low-density lipoprotein receptor-related protein 11 (LRP11).